Consider the following 499-residue polypeptide: BTB/POZ domain-containing protein 16 (499 aa).

The 57-residue stretch at 143–199 folds into the BTB domain; it reads INDPLVTREAFATALKNLYMQEVKICLDDVLGVLAAAHILQFGSLFQRCVTVMMSGL.

This chain is BTB/POZ domain-containing protein 16 (BTBD16), found in Bos taurus (Bovine).